The sequence spans 481 residues: UDP-glucose 6-dehydrogenase 1 (481 aa).

Residues 8-13 (GAGYVG), D33, R38, 86-90 (VNTPT), 127-128 (ST), and E162 each bind NAD(+). Substrate is bound by residues 158–162 (EFLAE), 217–224 (KLAANAFL), and 257–270 (RIGAKFLNASVGFG). C273 serves as the catalytic Nucleophile. 273–276 (CFQK) provides a ligand contact to NAD(+). 335–336 (FK) is a substrate binding site. Position 343 (R343) interacts with NAD(+). The residue at position 394 (S394) is a Phosphoserine. R448 provides a ligand contact to substrate.

It belongs to the UDP-glucose/GDP-mannose dehydrogenase family.

The catalysed reaction is UDP-alpha-D-glucose + 2 NAD(+) + H2O = UDP-alpha-D-glucuronate + 2 NADH + 3 H(+). It participates in nucleotide-sugar biosynthesis; UDP-alpha-D-glucuronate biosynthesis; UDP-alpha-D-glucuronate from UDP-alpha-D-glucose: step 1/1. Its function is as follows. Involved in the biosynthesis of UDP-glucuronic acid (UDP-GlcA), providing nucleotide sugars for cell-wall polymers. The protein is UDP-glucose 6-dehydrogenase 1 (UGD1) of Oryza sativa subsp. japonica (Rice).